Consider the following 883-residue polypeptide: DNA mismatch repair protein MutS (883 aa).

The segment at 1 to 25 (MSDSVAPDVPVIREGKNPAQHRDRT) is disordered. Residues 11-25 (VIREGKNPAQHRDRT) show a composition bias toward basic and acidic residues. 664–671 (GPNASGKS) provides a ligand contact to ATP. Residues 857 to 883 (RKGNTQPRARKSSAETEAKTQQFELPF) form a disordered region.

Belongs to the DNA mismatch repair MutS family.

Its function is as follows. This protein is involved in the repair of mismatches in DNA. It is possible that it carries out the mismatch recognition step. This protein has a weak ATPase activity. This Acaryochloris marina (strain MBIC 11017) protein is DNA mismatch repair protein MutS.